A 152-amino-acid chain; its full sequence is Large ribosomal subunit protein bL9 (152 aa).

The protein belongs to the bacterial ribosomal protein bL9 family.

Its function is as follows. Binds to the 23S rRNA. The protein is Large ribosomal subunit protein bL9 of Mycobacterium leprae (strain Br4923).